Consider the following 250-residue polypeptide: uncharacterized protein (250 aa).

The region spanning 7-244 is the ABC transporter domain; sequence LKVEDLHVYR…YKKECGKCYK (238 aa). 39–46 lines the ATP pocket; that stretch reads GPNGAGKS.

The protein belongs to the ABC transporter superfamily.

This is an uncharacterized protein from Methanocaldococcus jannaschii (strain ATCC 43067 / DSM 2661 / JAL-1 / JCM 10045 / NBRC 100440) (Methanococcus jannaschii).